A 271-amino-acid chain; its full sequence is MATH domain and coiled-coil domain-containing protein At3g27040 (271 aa).

The region spanning 7-133 (DKKFTWVIKN…NGEVKIVAEV (127 aa)) is the MATH domain. Positions 230 to 271 (KLDWLEKKLKETGKSRLQEIEEDLKDLKVKCADMDALLDFLR) form a coiled coil.

In Arabidopsis thaliana (Mouse-ear cress), this protein is MATH domain and coiled-coil domain-containing protein At3g27040.